The sequence spans 569 residues: Protein misato homolog 1 (569 aa).

Phosphoserine is present on residues Ser-41 and Ser-495.

The protein belongs to the misato family.

Its subcellular location is the mitochondrion outer membrane. The protein localises to the cytoplasm. Involved in the regulation of mitochondrial distribution and morphology. Required for mitochondrial fusion and mitochondrial network formation. The polypeptide is Protein misato homolog 1 (MSTO1) (Macaca fascicularis (Crab-eating macaque)).